Reading from the N-terminus, the 308-residue chain is Protein translocase subunit SecF (308 aa).

Helical transmembrane passes span 14-34 (FFLLSGAITVAGVIVFALFGF), 134-154 (VYAVLAAAACIVVYIAIRFEF), 158-178 (ISGIIALLHDAFIVLAAFALL), 185-205 (TFVAALLTIVGYSINDTIVIF), 238-258 (SIRTVLTVLIAAVILYFFGGI), and 267-287 (LIIGLVSGAYSSIFIASPIWV).

Belongs to the SecD/SecF family. SecF subfamily. Forms a complex with SecD. Part of the essential Sec protein translocation apparatus which comprises SecA, SecYEG and auxiliary proteins SecDF. Other proteins may also be involved.

Its subcellular location is the cell membrane. Functionally, part of the Sec protein translocase complex. Interacts with the SecYEG preprotein conducting channel. SecDF uses the proton motive force (PMF) to complete protein translocation after the ATP-dependent function of SecA. In Alicyclobacillus acidocaldarius subsp. acidocaldarius (strain ATCC 27009 / DSM 446 / BCRC 14685 / JCM 5260 / KCTC 1825 / NBRC 15652 / NCIMB 11725 / NRRL B-14509 / 104-IA) (Bacillus acidocaldarius), this protein is Protein translocase subunit SecF.